The following is a 604-amino-acid chain: Aspartate--tRNA(Asp/Asn) ligase (604 aa).

Glu-187 serves as a coordination point for L-aspartate. The interval 211-214 is aspartate; the sequence is QQFK. L-aspartate-binding residues include Arg-233 and His-461. An ATP-binding site is contributed by 233–235; that stretch reads RDE. Residue Glu-495 coordinates ATP. Residue Arg-502 coordinates L-aspartate. 547–550 contacts ATP; it reads GLDR.

This sequence belongs to the class-II aminoacyl-tRNA synthetase family. Type 1 subfamily. Homodimer.

It is found in the cytoplasm. It catalyses the reaction tRNA(Asx) + L-aspartate + ATP = L-aspartyl-tRNA(Asx) + AMP + diphosphate. Its function is as follows. Aspartyl-tRNA synthetase with relaxed tRNA specificity since it is able to aspartylate not only its cognate tRNA(Asp) but also tRNA(Asn). Reaction proceeds in two steps: L-aspartate is first activated by ATP to form Asp-AMP and then transferred to the acceptor end of tRNA(Asp/Asn). In Chlorobium luteolum (strain DSM 273 / BCRC 81028 / 2530) (Pelodictyon luteolum), this protein is Aspartate--tRNA(Asp/Asn) ligase.